A 288-amino-acid chain; its full sequence is MAAMIRLFRSSSSSSSNSISLISRSLSTAAASETVKSQSYPHNPHSTSVDPKAKTVQWVFLGCPGVGKGTYASRLSTLLGVPHIATGDLVRDELKSSGPLSKQLAEIVNQGKLVSDEIILNLLSKRLESGEAKGEAGFILDGFPRTVRQAEILTEVTDIDLVVNLKLPERVLVEKCLGRRICSECGKNFNVASIDVAGENGAPRISMARLNPPFTVCFKLITRADDTEAIVKERLSIYWDKSQPVEDFYRSQGKLLEFDLPGGIPESWPKLLEVLNLDEQEYKLSPAA.

Position 65 to 70 (Gly65 to Thr70) interacts with ATP. Residues Ala85–Val114 form an NMP region. AMP is bound by residues Thr86, Arg91, Lys112–Val114, Gly142–Arg145, and Gln149. The LID stretch occupies residues Gly178–Asp226. Arg179 provides a ligand contact to ATP. AMP-binding residues include Arg223 and Arg234. Gly262 contributes to the ATP binding site.

It belongs to the adenylate kinase family. As to quaternary structure, monomer.

It is found in the cytoplasm. It carries out the reaction AMP + ATP = 2 ADP. Catalyzes the reversible transfer of the terminal phosphate group between ATP and AMP. Plays an important role in cellular energy homeostasis and in adenine nucleotide metabolism. The chain is Adenylate kinase (ADK) from Solanum tuberosum (Potato).